A 168-amino-acid polypeptide reads, in one-letter code: TTVPKMLINLQKQNKAISYAGCITQLSFVLLFAGMENFLLAAMAYDRYVAICKPLRYTAIMKAHLCLVMTLLSLCISIVDALLHGLMILRLSFCTFLEIPHYFCELYQVIKLSCSDTLINNILVYTMTSTLGGVPLGGIIFSYFKIISSILRMPSSGSRHRAFSTCGS.

At 1 to 25 the chain is on the extracellular side; it reads TTVPKMLINLQKQNKAISYAGCITQ. C22 and C104 are oxidised to a cystine. Residues 26–45 traverse the membrane as a helical segment; that stretch reads LSFVLLFAGMENFLLAAMAY. Over 46-67 the chain is Cytoplasmic; sequence DRYVAICKPLRYTAIMKAHLCL. A helical membrane pass occupies residues 68–88; it reads VMTLLSLCISIVDALLHGLMI. Residues 89 to 121 lie on the Extracellular side of the membrane; it reads LRLSFCTFLEIPHYFCELYQVIKLSCSDTLINN. Residues 122 to 143 form a helical membrane-spanning segment; that stretch reads ILVYTMTSTLGGVPLGGIIFSY. The Cytoplasmic portion of the chain corresponds to 144-165; the sequence is FKIISSILRMPSSGSRHRAFST. Residues 166–168 form a helical membrane-spanning segment; sequence CGS.

This sequence belongs to the G-protein coupled receptor 1 family. Tongue specific.

It localises to the cell membrane. In terms of biological role, possible taste receptor. The protein is Putative gustatory receptor clone PTE03 (Olr1145) of Rattus norvegicus (Rat).